Consider the following 334-residue polypeptide: Ketol-acid reductoisomerase (NADP(+)) (334 aa).

A KARI N-terminal Rossmann domain is found at 2 to 182 (PKMYYEKDTD…GGARAGVLET (181 aa)). NADP(+) is bound by residues 25–28 (YGSQ), Ser51, Ser53, and 83–86 (DEKQ). The active site involves His108. Residue Gly134 coordinates NADP(+). Residues 183–328 (TFKDETETDL…KELRGMMSWI (146 aa)) form the KARI C-terminal knotted domain. The Mg(2+) site is built by Asp191, Glu195, Glu227, and Glu231. Ser252 serves as a coordination point for substrate.

This sequence belongs to the ketol-acid reductoisomerase family. Mg(2+) is required as a cofactor.

It carries out the reaction (2R)-2,3-dihydroxy-3-methylbutanoate + NADP(+) = (2S)-2-acetolactate + NADPH + H(+). The catalysed reaction is (2R,3R)-2,3-dihydroxy-3-methylpentanoate + NADP(+) = (S)-2-ethyl-2-hydroxy-3-oxobutanoate + NADPH + H(+). The protein operates within amino-acid biosynthesis; L-isoleucine biosynthesis; L-isoleucine from 2-oxobutanoate: step 2/4. Its pathway is amino-acid biosynthesis; L-valine biosynthesis; L-valine from pyruvate: step 2/4. Functionally, involved in the biosynthesis of branched-chain amino acids (BCAA). Catalyzes an alkyl-migration followed by a ketol-acid reduction of (S)-2-acetolactate (S2AL) to yield (R)-2,3-dihydroxy-isovalerate. In the isomerase reaction, S2AL is rearranged via a Mg-dependent methyl migration to produce 3-hydroxy-3-methyl-2-ketobutyrate (HMKB). In the reductase reaction, this 2-ketoacid undergoes a metal-dependent reduction by NADPH to yield (R)-2,3-dihydroxy-isovalerate. The chain is Ketol-acid reductoisomerase (NADP(+)) from Clostridium beijerinckii (strain ATCC 51743 / NCIMB 8052) (Clostridium acetobutylicum).